Reading from the N-terminus, the 656-residue chain is Choline transporter-like protein 3 (656 aa).

Residues 37–57 (WLVLFFLFWTGLVFIMGYSVV) traverse the membrane as a helical segment. N141 and N154 each carry an N-linked (GlcNAc...) asparagine glycan. The next 5 membrane-spanning stretches (helical) occupy residues 216-236 (DTIL…LFAF), 242-262 (LLIH…CGVL), 288-308 (LAFA…IFTL), 337-357 (LWTC…LLSL), and 381-401 (YMWW…LACQ). Residues N506 and N524 are each glycosylated (N-linked (GlcNAc...) asparagine). The chain crosses the membrane as a helical span at residues 537–557 (FVIFLGKVLVVCFSIFGGLMA). N559 is a glycosylation site (N-linked (GlcNAc...) asparagine). The helical transmembrane segment at 566 to 586 (VWAIPLLLVAFFACVVAHSFL) threads the bilayer. The segment at 634–656 (AKSQGQKDALPNEEGTELQPIVR) is disordered.

This sequence belongs to the CTL (choline transporter-like) family.

Its subcellular location is the membrane. In Mus musculus (Mouse), this protein is Choline transporter-like protein 3 (Slc44a3).